A 119-amino-acid chain; its full sequence is Large ribosomal subunit protein uL22 (119 aa).

It belongs to the universal ribosomal protein uL22 family. Part of the 50S ribosomal subunit.

Functionally, this protein binds specifically to 23S rRNA; its binding is stimulated by other ribosomal proteins, e.g. L4, L17, and L20. It is important during the early stages of 50S assembly. It makes multiple contacts with different domains of the 23S rRNA in the assembled 50S subunit and ribosome. Its function is as follows. The globular domain of the protein is located near the polypeptide exit tunnel on the outside of the subunit, while an extended beta-hairpin is found that lines the wall of the exit tunnel in the center of the 70S ribosome. This chain is Large ribosomal subunit protein uL22, found in Chlorobium chlorochromatii (strain CaD3).